Reading from the N-terminus, the 408-residue chain is Adenylosuccinate synthetase (408 aa).

GTP-binding positions include 12-18 (GDEGKGK) and 40-42 (GHT). The Proton acceptor role is filled by D13. 2 residues coordinate Mg(2+): D13 and G40. IMP-binding positions include 13 to 16 (DEGK), 38 to 41 (NAGH), T121, R135, Q213, T228, and R292. H41 serves as the catalytic Proton donor. Residue 288–294 (TTTGRPR) coordinates substrate. Residues R294, 320–322 (KLD), and 393–395 (STS) each bind GTP.

Belongs to the adenylosuccinate synthetase family. As to quaternary structure, homodimer. It depends on Mg(2+) as a cofactor.

The protein localises to the cytoplasm. The enzyme catalyses IMP + L-aspartate + GTP = N(6)-(1,2-dicarboxyethyl)-AMP + GDP + phosphate + 2 H(+). It participates in purine metabolism; AMP biosynthesis via de novo pathway; AMP from IMP: step 1/2. Its function is as follows. Plays an important role in the de novo pathway of purine nucleotide biosynthesis. Catalyzes the first committed step in the biosynthesis of AMP from IMP. The chain is Adenylosuccinate synthetase from Thermus thermophilus (strain ATCC BAA-163 / DSM 7039 / HB27).